We begin with the raw amino-acid sequence, 152 residues long: Atypical leghemoglobin 2-1 (152 aa).

One can recognise a Globin domain in the interval 3–152; the sequence is TFSEEQEALV…LAGVIKKGMS (150 aa). Tyrosine 31 carries the post-translational modification Nitrated tyrosine. Serine 46 is a heme b binding site. Serine 46 is modified (phosphoserine). Residue histidine 64 participates in O2 binding. 3 residues coordinate heme b: lysine 67, histidine 99, and arginine 102. Tyrosine 140 is modified (nitrated tyrosine).

Belongs to the plant globin family. Monomer. Nitrated in effective nodules and particularly in hypoxic conditions; this mechanism may play a protective role in the symbiosis by buffering toxic peroxynitrite NO(2)(-). Nitration level decrease during nodule senescence. In terms of processing, phosphorylation at Ser-46 disrupts the molecular environment of its porphyrin ring oxygen binding pocket, thus leading to a reduced oxygen consumption and to the delivery of oxygen O(2) to symbiosomes. In terms of tissue distribution, mainly expressed in leaves and, at low levels, in roots of non-nodulated plants. However, accumulates also in nodules and roots, and, to a lower extent, in leaves, stems, flowers and fruits, in nodulated plants.

Its function is as follows. Atypical leghemoglobin that reversibly binds oxygen O(2) through a pentacoordinated heme iron. In nodules, facilitates the diffusion of oxygen to the bacteroids while preventing the bacterial nitrogenase from being inactivated by buffering dioxygen, nitric oxide and carbon monoxide. This role is essential for symbiotic nitrogen fixation (SNF). Seems not restricted to symbiotic nitrogen fixation and root nodules formation, but also contributes to general plant development and metabolism. This is Atypical leghemoglobin 2-1 from Lotus japonicus (Lotus corniculatus var. japonicus).